A 321-amino-acid chain; its full sequence is Probable protein phosphatase 2C 44 (321 aa).

Disordered stretches follow at residues 1-36 (MVGRMERQSASSSASCSPSSSAAGTSSSSSACGGKK) and 51-70 (NSSSTDTGKGRSKQSSNKVT). The segment covering 9-31 (SASSSASCSPSSSAAGTSSSSSA) has biased composition (low complexity). The span at 51 to 69 (NSSSTDTGKGRSKQSSNKV) shows a compositional bias: polar residues. Positions 70 to 319 (THGFHLVEGK…DDISCIVIRF (250 aa)) constitute a PPM-type phosphatase domain. Mn(2+) is bound by residues aspartate 107, glycine 108, aspartate 271, and aspartate 310.

It belongs to the PP2C family. It depends on Mg(2+) as a cofactor. The cofactor is Mn(2+).

The catalysed reaction is O-phospho-L-seryl-[protein] + H2O = L-seryl-[protein] + phosphate. It catalyses the reaction O-phospho-L-threonyl-[protein] + H2O = L-threonyl-[protein] + phosphate. In Oryza sativa subsp. japonica (Rice), this protein is Probable protein phosphatase 2C 44.